The following is a 655-amino-acid chain: Tetratricopeptide repeat protein 30 homolog (655 aa).

TPR repeat units lie at residues 10 to 43 (EGHV…ANTR), 44 to 76 (AGLS…APKE), 143 to 176 (ADTL…GGFN), 178 to 210 (LVAY…GMRN), 385 to 418 (LAAK…YLPV), 450 to 484 (SIWR…HSDD), and 534 to 567 (CIVN…GSGN).

Belongs to the TTC30/dfy-1/fleer family.

It is found in the cell projection. It localises to the cilium. In terms of biological role, required for polyglutamylation of axonemal tubulin in sensory cilia. Plays a role in anterograde intraflagellar transport (IFT), the process by which cilia precursors are transported from the base of the cilium to the site of their incorporation at the tip. The polypeptide is Tetratricopeptide repeat protein 30 homolog (Drosophila melanogaster (Fruit fly)).